Consider the following 487-residue polypeptide: L-tartrate/succinate antiporter (487 aa).

Helical transmembrane passes span 10–30 (YLAP…AGLE), 33–53 (TWLY…EPVP), 54–74 (GAVV…WLLF), 93–113 (WAVS…FMFG), 137–157 (TLFL…VTPS), 189–209 (IGSY…AIFL), 236–256 (FLGM…LAYV), 292–312 (LMVG…AAMV), 313–333 (GYSV…DIVS), 340–360 (VFFW…TGFI), 370–390 (SLSG…FYLL), 393–413 (FFAS…AAAL), 418–438 (IPLP…SILT), and 465–485 (IFGL…MPVV).

Belongs to the SLC13A/DASS transporter (TC 2.A.47) family. DIT1 subfamily.

The protein localises to the cell inner membrane. The catalysed reaction is (2R,3R)-tartrate(out) + succinate(in) = (2R,3R)-tartrate(in) + succinate(out). Catalyzes the uptake of tartrate in exchange for intracellular succinate. Essential for anaerobic L-tartrate fermentation. The chain is L-tartrate/succinate antiporter (ttdT) from Shigella flexneri.